An 845-amino-acid chain; its full sequence is Molybdenum cofactor sulfurase (845 aa).

Lysine 240 carries the post-translational modification N6-(pyridoxal phosphate)lysine. Cysteine 404 is a catalytic residue. One can recognise an MOSC domain in the interval 666-840; it reads SFPQDSSPSS…LMVGDTVTPS (175 aa).

This sequence belongs to the class-V pyridoxal-phosphate-dependent aminotransferase family. MOCOS subfamily. Pyridoxal 5'-phosphate is required as a cofactor.

The catalysed reaction is Mo-molybdopterin + L-cysteine + AH2 = thio-Mo-molybdopterin + L-alanine + A + H2O. It participates in cofactor biosynthesis; molybdopterin biosynthesis. Sulfurates the molybdenum cofactor. Sulfation of molybdenum is essential for xanthine dehydrogenase (XDH) and aldehyde oxidase (ADO) enzymes in which molybdenum cofactor is liganded by 1 oxygen and 1 sulfur atom in active form. This Aspergillus clavatus (strain ATCC 1007 / CBS 513.65 / DSM 816 / NCTC 3887 / NRRL 1 / QM 1276 / 107) protein is Molybdenum cofactor sulfurase.